Here is a 188-residue protein sequence, read N- to C-terminus: Peptidyl-tRNA hydrolase (188 aa).

Tyr-14 is a binding site for tRNA. His-19 acts as the Proton acceptor in catalysis. Positions 64, 66, and 112 each coordinate tRNA.

Belongs to the PTH family. As to quaternary structure, monomer.

The protein resides in the cytoplasm. It catalyses the reaction an N-acyl-L-alpha-aminoacyl-tRNA + H2O = an N-acyl-L-amino acid + a tRNA + H(+). In terms of biological role, hydrolyzes ribosome-free peptidyl-tRNAs (with 1 or more amino acids incorporated), which drop off the ribosome during protein synthesis, or as a result of ribosome stalling. Functionally, catalyzes the release of premature peptidyl moieties from peptidyl-tRNA molecules trapped in stalled 50S ribosomal subunits, and thus maintains levels of free tRNAs and 50S ribosomes. This Bacillus pumilus (strain SAFR-032) protein is Peptidyl-tRNA hydrolase.